The chain runs to 215 residues: Ras-related protein Rab-5A (215 aa).

GTP is bound by residues Ser-29, Ala-30, Gly-32, Lys-33, Ser-34, Ser-35, His-46, Glu-47, Thr-52, and Gly-78. Ser-34 is a binding site for Mg(2+). 2 consecutive short sequence motifs (switch) follow at residues 44-56 (QFHE…IGAA) and 77-93 (AGQE…YRGA). Thr-52 serves as a coordination point for Mg(2+). Ser-84 is modified (phosphoserine). Residues Asn-133, Lys-134, Asp-136, Ala-164, and Lys-165 each contribute to the GTP site. Residues 181–215 (LPKNEPQNPGANSARGRGVDLTEPAQPARSQCCSN) are disordered. S-geranylgeranyl cysteine attachment occurs at residues Cys-212 and Cys-213.

The protein belongs to the small GTPase superfamily. Rab family. As to quaternary structure, interacts with GDI1; this promotes dissociation from membranes; phosphorylation at Ser-84 disrupts this interaction. Interacts with GDI2; phosphorylation at Ser-84 disrupts the interaction. Interacts with EEA1. Interacts with RIN1 and GAPVD1, which regulate its pathway, probably by acting as a GEF. Interacts with ALS2CL, SUN2, ZFYVE20 and RUFY1. Interacts with RABEP1; one RABEP1 homodimer binds two RAB5A chains, but at opposite sides of the dimer. Interacts with SGSM1, SGSM3 and PIK3CB. Interacts with RINL. May be a component of a complex composed of RAB5A, DYN2 and PIK3C3. Does not interact with the BLOC-3 complex (heterodimer of HPS1 and HPS4). Interacts with CLN5. Interacts with APPL2. Interacts with F8A1/F8A2/F8A3. Found in a complex with F8A1/F8A2/F8A3, HTT and RAB5A; mediates the recruitment of HTT by RAB5A onto early endosomes. Interacts with ATP9A. Interacts with PPP1R21; mediates the recruitment of FERRY complex by RAB5A onto early endosomes. Mg(2+) is required as a cofactor. Phosphorylation of Ser-84 in the switch II region by LRRK2 prevents the association of RAB regulatory proteins, including RAB GDP dissociation inhibitors GDI1 and GDI2.

The protein resides in the cell membrane. It localises to the early endosome membrane. Its subcellular location is the melanosome. The protein localises to the cytoplasmic vesicle. It is found in the cell projection. The protein resides in the ruffle. It localises to the membrane. Its subcellular location is the cytoplasm. The protein localises to the cytosol. It is found in the phagosome membrane. The protein resides in the endosome membrane. The enzyme catalyses GTP + H2O = GDP + phosphate + H(+). Its activity is regulated as follows. Regulated by guanine nucleotide exchange factors (GEFs) including RINL, which promote the exchange of bound GDP for free GTP. Regulated by GTPase activating proteins (GAPs) which increase the GTP hydrolysis activity. Inhibited by GDP dissociation inhibitors (GDIs). The small GTPases Rab are key regulators of intracellular membrane trafficking, from the formation of transport vesicles to their fusion with membranes. Rabs cycle between an inactive GDP-bound form and an active GTP-bound form that is able to recruit to membranes different sets of downstream effectors directly responsible for vesicle formation, movement, tethering and fusion. RAB5A is required for the fusion of plasma membranes and early endosomes. Contributes to the regulation of filopodia extension. Required for the exosomal release of SDCBP, CD63, PDCD6IP and syndecan. Regulates maturation of apoptotic cell-containing phagosomes, probably downstream of DYN2 and PIK3C3. The protein is Ras-related protein Rab-5A of Rattus norvegicus (Rat).